Here is a 37-residue protein sequence, read N- to C-terminus: Esculentin-2Ra (37 aa).

Residues cysteine 31 and cysteine 37 are joined by a disulfide bond.

In terms of tissue distribution, expressed by the skin glands.

It is found in the secreted. Functionally, antimicrobial peptide. This chain is Esculentin-2Ra, found in Pelophylax ridibundus (Marsh frog).